We begin with the raw amino-acid sequence, 68 residues long: DNA-directed RNA polymerase subunit omega (68 aa).

It belongs to the RNA polymerase subunit omega family. The RNAP catalytic core consists of 2 alpha, 1 beta, 1 beta' and 1 omega subunit. When a sigma factor is associated with the core the holoenzyme is formed, which can initiate transcription.

The enzyme catalyses RNA(n) + a ribonucleoside 5'-triphosphate = RNA(n+1) + diphosphate. Its function is as follows. Promotes RNA polymerase assembly. Latches the N- and C-terminal regions of the beta' subunit thereby facilitating its interaction with the beta and alpha subunits. In Alkaliphilus metalliredigens (strain QYMF), this protein is DNA-directed RNA polymerase subunit omega.